A 945-amino-acid chain; its full sequence is Valine--tRNA ligase (945 aa).

Residues 42-52 (PNVTGTLHMGH) carry the 'HIGH' region motif. The 'KMSKS' region signature appears at 552–556 (KMSKS). Lysine 555 serves as a coordination point for ATP. Positions 879 to 945 (DKAAETARLS…VQNQLAKLKD (67 aa)) form a coiled coil.

The protein belongs to the class-I aminoacyl-tRNA synthetase family. ValS type 1 subfamily. Monomer.

Its subcellular location is the cytoplasm. It catalyses the reaction tRNA(Val) + L-valine + ATP = L-valyl-tRNA(Val) + AMP + diphosphate. In terms of biological role, catalyzes the attachment of valine to tRNA(Val). As ValRS can inadvertently accommodate and process structurally similar amino acids such as threonine, to avoid such errors, it has a 'posttransfer' editing activity that hydrolyzes mischarged Thr-tRNA(Val) in a tRNA-dependent manner. This Neisseria meningitidis serogroup B (strain ATCC BAA-335 / MC58) protein is Valine--tRNA ligase.